A 389-amino-acid polypeptide reads, in one-letter code: Chalcone synthase 3 (389 aa).

Residue cysteine 164 is part of the active site.

The protein belongs to the thiolase-like superfamily. Chalcone/stilbene synthases family.

The catalysed reaction is (E)-4-coumaroyl-CoA + 3 malonyl-CoA + 3 H(+) = 2',4,4',6'-tetrahydroxychalcone + 3 CO2 + 4 CoA. It participates in secondary metabolite biosynthesis; flavonoid biosynthesis. Its function is as follows. The primary product of this enzyme is 4,2',4',6'-tetrahydroxychalcone (also termed naringenin-chalcone or chalcone) which can under specific conditions spontaneously isomerize into naringenin. The chain is Chalcone synthase 3 (CHS3) from Camellia sinensis (Tea plant).